Consider the following 206-residue polypeptide: Ras-related protein Rab7 (206 aa).

Residues 15–22 (GDSGVGKT), 63–67 (DTAGQ), and 125–128 (NKVD) each bind GTP. S-geranylgeranyl cysteine attachment occurs at residues cysteine 205 and cysteine 206.

This sequence belongs to the small GTPase superfamily. Rab family.

It localises to the cell membrane. Protein transport. Probably involved in vesicular traffic. This is Ras-related protein Rab7 from Cenchrus ciliaris (Buffelgrass).